The following is a 100-amino-acid chain: NADH-quinone oxidoreductase subunit K (100 aa).

A run of 3 helical transmembrane segments spans residues 1-21 (MIGL…GLAG), 28-48 (ILLL…GFVA), and 64-84 (FIIS…ILWF).

Belongs to the complex I subunit 4L family. In terms of assembly, NDH-1 is composed of 14 different subunits. Subunits NuoA, H, J, K, L, M, N constitute the membrane sector of the complex.

The protein localises to the cell inner membrane. It carries out the reaction a quinone + NADH + 5 H(+)(in) = a quinol + NAD(+) + 4 H(+)(out). Its function is as follows. NDH-1 shuttles electrons from NADH, via FMN and iron-sulfur (Fe-S) centers, to quinones in the respiratory chain. The immediate electron acceptor for the enzyme in this species is believed to be ubiquinone. Couples the redox reaction to proton translocation (for every two electrons transferred, four hydrogen ions are translocated across the cytoplasmic membrane), and thus conserves the redox energy in a proton gradient. This chain is NADH-quinone oxidoreductase subunit K, found in Helicobacter pylori (strain ATCC 700392 / 26695) (Campylobacter pylori).